The following is a 662-amino-acid chain: Fructose-1,6-bisphosphatase class 3 (662 aa).

It belongs to the FBPase class 3 family. Mn(2+) serves as cofactor.

The catalysed reaction is beta-D-fructose 1,6-bisphosphate + H2O = beta-D-fructose 6-phosphate + phosphate. It participates in carbohydrate biosynthesis; gluconeogenesis. The chain is Fructose-1,6-bisphosphatase class 3 from Clostridium tetani (strain Massachusetts / E88).